The primary structure comprises 321 residues: Glutathione synthetase (321 aa).

An ATP-grasp domain is found at 125–311 (EKLFTGWFPH…IAGQFIAFLE (187 aa)). ATP is bound at residue 151–208 (FIREQKEVVIKPLGAMAGESIFYLTVNDPNIPVVIETMTANGHQLVMAQRFIPEVKSG). Positions 282 and 284 each coordinate Mg(2+).

This sequence belongs to the prokaryotic GSH synthase family. Mg(2+) serves as cofactor. Mn(2+) is required as a cofactor.

The enzyme catalyses gamma-L-glutamyl-L-cysteine + glycine + ATP = glutathione + ADP + phosphate + H(+). It functions in the pathway sulfur metabolism; glutathione biosynthesis; glutathione from L-cysteine and L-glutamate: step 2/2. The protein is Glutathione synthetase of Coxiella burnetii (strain RSA 493 / Nine Mile phase I).